The following is a 122-amino-acid chain: Thioredoxin H-type (122 aa).

The region spanning 2 to 118 (AAEEGVVIAC…IVKHVGATAA (117 aa)) is the Thioredoxin domain. A disulfide bridge links cysteine 40 with cysteine 43.

Its subcellular location is the cytoplasm. Its function is as follows. Participates in various redox reactions through the reversible oxidation of the active center dithiol to a disulfide. The H form is known to activate a number of cytosolic enzymes. This Oryza sativa subsp. indica (Rice) protein is Thioredoxin H-type (TRXH).